The following is a 115-amino-acid chain: MSIESDMIHVEVVYALPHEQRVFNLVVNNHATVEEIIRQSGVLELYPEIDLAKNKVGVFSRNVKLDATVRDKDRIEIYRPLLADPKEIRRKRAEQAKAAGNADPVTGGKPNALRK.

The segment at 92 to 115 is disordered; that stretch reads RAEQAKAAGNADPVTGGKPNALRK.

This sequence belongs to the UPF0125 (RnfH) family.

The polypeptide is UPF0125 protein VP0646 (Vibrio parahaemolyticus serotype O3:K6 (strain RIMD 2210633)).